The following is a 282-amino-acid chain: Large ribosomal subunit protein uL2 (282 aa).

The interval 215–282 is disordered; the sequence is RHKGIRPTVR…IIRSRKETKK (68 aa). Positions 263–282 are enriched in basic residues; sequence RNPKKPSTKLIIRSRKETKK.

It belongs to the universal ribosomal protein uL2 family. As to quaternary structure, part of the 50S ribosomal subunit. Forms a bridge to the 30S subunit in the 70S ribosome.

Functionally, one of the primary rRNA binding proteins. Required for association of the 30S and 50S subunits to form the 70S ribosome, for tRNA binding and peptide bond formation. It has been suggested to have peptidyltransferase activity; this is somewhat controversial. Makes several contacts with the 16S rRNA in the 70S ribosome. The polypeptide is Large ribosomal subunit protein uL2 (Mesomycoplasma hyopneumoniae (strain 7448) (Mycoplasma hyopneumoniae)).